Here is a 277-residue protein sequence, read N- to C-terminus: Putative hydro-lyase BPP3031 (277 aa).

Belongs to the D-glutamate cyclase family.

In Bordetella parapertussis (strain 12822 / ATCC BAA-587 / NCTC 13253), this protein is Putative hydro-lyase BPP3031.